Reading from the N-terminus, the 503-residue chain is Probable cytosol aminopeptidase (503 aa).

Mn(2+) contacts are provided by lysine 270 and aspartate 275. Lysine 282 is an active-site residue. Aspartate 293, aspartate 352, and glutamate 354 together coordinate Mn(2+). Residue arginine 356 is part of the active site.

It belongs to the peptidase M17 family. The cofactor is Mn(2+).

The protein localises to the cytoplasm. It catalyses the reaction Release of an N-terminal amino acid, Xaa-|-Yaa-, in which Xaa is preferably Leu, but may be other amino acids including Pro although not Arg or Lys, and Yaa may be Pro. Amino acid amides and methyl esters are also readily hydrolyzed, but rates on arylamides are exceedingly low.. It carries out the reaction Release of an N-terminal amino acid, preferentially leucine, but not glutamic or aspartic acids.. Presumably involved in the processing and regular turnover of intracellular proteins. Catalyzes the removal of unsubstituted N-terminal amino acids from various peptides. This Shigella flexneri protein is Probable cytosol aminopeptidase.